A 420-amino-acid chain; its full sequence is Xyloglucan O-acetyltransferase 4 (420 aa).

Residues 1–30 (MTMHEKMKLPSCSCSAFKCGKKDRWLNMER) lie on the Cytoplasmic side of the membrane. Residues 31 to 51 (PIPFLLIGLTTILSVFILYTL) traverse the membrane as a helical; Signal-anchor for type II membrane protein segment. Residues 52 to 420 (NPLKFVIEHN…LLLAVLRRLD (369 aa)) are Lumenal-facing. 4 cysteine pairs are disulfide-bonded: Cys-78–Cys-128, Cys-99–Cys-164, Cys-108–Cys-400, and Cys-323–Cys-396. An N-linked (GlcNAc...) asparagine glycan is attached at Asn-96. The short motif at 151-153 (GDS) is the GDS motif element. The Nucleophile role is filled by Ser-153. N-linked (GlcNAc...) asparagine glycosylation is found at Asn-192, Asn-212, Asn-270, and Asn-324. The active-site Proton donor is Asp-395. A DXXH motif motif is present at residues 395–398 (DCVH). Catalysis depends on His-398, which acts as the Proton acceptor.

This sequence belongs to the PC-esterase family. TBL subfamily.

It localises to the golgi apparatus membrane. Xyloglucan acetyltransferase that catalyzes the acetylation of fucosylated Gal residues on xyloglucan side chains. Predominantly catalyze 6-O-monoacetylation of Gal residues in the Fuc-Gal-Xyl trisaccharide side chains of xyloglucan oligomers. The chain is Xyloglucan O-acetyltransferase 4 from Populus trichocarpa (Western balsam poplar).